We begin with the raw amino-acid sequence, 408 residues long: Arginine biosynthesis bifunctional protein ArgJ (408 aa).

The substrate site is built by threonine 158, lysine 184, threonine 195, glutamate 281, asparagine 403, and threonine 408. Residue threonine 195 is the Nucleophile of the active site.

Belongs to the ArgJ family. As to quaternary structure, heterotetramer of two alpha and two beta chains.

Its subcellular location is the cytoplasm. It carries out the reaction N(2)-acetyl-L-ornithine + L-glutamate = N-acetyl-L-glutamate + L-ornithine. The catalysed reaction is L-glutamate + acetyl-CoA = N-acetyl-L-glutamate + CoA + H(+). It functions in the pathway amino-acid biosynthesis; L-arginine biosynthesis; L-ornithine and N-acetyl-L-glutamate from L-glutamate and N(2)-acetyl-L-ornithine (cyclic): step 1/1. The protein operates within amino-acid biosynthesis; L-arginine biosynthesis; N(2)-acetyl-L-ornithine from L-glutamate: step 1/4. Functionally, catalyzes two activities which are involved in the cyclic version of arginine biosynthesis: the synthesis of N-acetylglutamate from glutamate and acetyl-CoA as the acetyl donor, and of ornithine by transacetylation between N(2)-acetylornithine and glutamate. The polypeptide is Arginine biosynthesis bifunctional protein ArgJ (Bacillus thuringiensis subsp. konkukian (strain 97-27)).